The primary structure comprises 150 residues: Endoribonuclease YbeY (150 aa).

Zn(2+)-binding residues include His108, His112, and His118.

The protein belongs to the endoribonuclease YbeY family. It depends on Zn(2+) as a cofactor.

Its subcellular location is the cytoplasm. Functionally, single strand-specific metallo-endoribonuclease involved in late-stage 70S ribosome quality control and in maturation of the 3' terminus of the 16S rRNA. This is Endoribonuclease YbeY from Methylococcus capsulatus (strain ATCC 33009 / NCIMB 11132 / Bath).